The primary structure comprises 303 residues: N-acetyl-D-glucosamine kinase (303 aa).

ATP is bound by residues 4–11 and 133–140; these read GFDIGGTK and GVGGGLVL. 4 residues coordinate Zn(2+): histidine 157, cysteine 177, cysteine 179, and cysteine 184.

Belongs to the ROK (NagC/XylR) family. NagK subfamily.

The enzyme catalyses N-acetyl-D-glucosamine + ATP = N-acetyl-D-glucosamine 6-phosphate + ADP + H(+). The protein operates within cell wall biogenesis; peptidoglycan recycling. In terms of biological role, catalyzes the phosphorylation of N-acetyl-D-glucosamine (GlcNAc) derived from cell-wall degradation, yielding GlcNAc-6-P. This Salmonella heidelberg (strain SL476) protein is N-acetyl-D-glucosamine kinase.